The primary structure comprises 499 residues: L-arabinose isomerase (499 aa).

Mn(2+) is bound by residues Glu-306, Glu-333, His-350, and His-449.

Belongs to the arabinose isomerase family. Requires Mn(2+) as cofactor.

It carries out the reaction beta-L-arabinopyranose = L-ribulose. Its pathway is carbohydrate degradation; L-arabinose degradation via L-ribulose; D-xylulose 5-phosphate from L-arabinose (bacterial route): step 1/3. In terms of biological role, catalyzes the conversion of L-arabinose to L-ribulose. The sequence is that of L-arabinose isomerase from Aeromonas salmonicida (strain A449).